We begin with the raw amino-acid sequence, 738 residues long: Flowering time control protein FCA (738 aa).

A disordered region spans residues 1–118 (MHRGGDRSTD…RGDHSDHDNR (118 aa)). Composition is skewed to gly residues over residues 52–70 (RGGGGGGGDGGGGGGGGGR) and 81–98 (SGGGGYRSGGGGEYGEPG). The segment covering 109-118 (RGDHSDHDNR) has biased composition (basic and acidic residues). 2 RRM domains span residues 122–203 (VKLF…YADG) and 213–293 (HKLF…FADP). Disordered regions lie at residues 292 to 414 (DPKR…GHHL) and 566 to 594 (QQSNLNHQQPTQGQPVQSSNPGAPNAIIP). The segment covering 301–311 (SRGGPAFGGPG) has biased composition (gly residues). A compositionally biased stretch (polar residues) spans 342–358 (HPSSPRSAPHQFNNFGS). Positions 368-377 (TVTSTTDTAT) are enriched in low complexity. 2 stretches are compositionally biased toward polar residues: residues 383–401 (FSGNGSLSSQTAVPSSSHM) and 575–594 (PTQGQPVQSSNPGAPNAIIP). In terms of domain architecture, WW spans 609 to 642 (VPLTCNWTEHTSPEGFKYYYNSITRESKWDKPEE). The interval 670–738 (MQQLQSPPQA…QSAQERAWKS (69 aa)) is disordered. The segment covering 683–706 (PAMQPVQQIPQAQQGQQQMQMKQQ) has biased composition (low complexity). Residues 723-732 (RIQQGIQSAQ) show a composition bias toward polar residues.

As to quaternary structure, interacts with FY. Binds to SF1, FIK, RPRD1B, Os09g0509000/LOC_Os09g33480 and MADS8. Mostly expressed in young flowers (panicles) and stems, and also present in young seedlings leaves and roots.

The protein localises to the nucleus. Its function is as follows. Plays a major role in the promotion of the transition of the vegetative meristem to reproductive development. Required for RNA-mediated chromatin silencing of a range of loci in the genome. Cotranscriptionally recognizes aberrant RNA and marks it for silencing. Controls alternative cleavage and polyadenylation on pre-mRNAs and antisense RNAs. Regulates flowering time, seed size and cell volume, probably via the modulation of cell size. In Oryza sativa subsp. japonica (Rice), this protein is Flowering time control protein FCA.